Here is a 107-residue protein sequence, read N- to C-terminus: Small ribosomal subunit protein uS17 (107 aa).

This sequence belongs to the universal ribosomal protein uS17 family. In terms of assembly, part of the 30S ribosomal subunit.

Functionally, one of the primary rRNA binding proteins, it binds specifically to the 5'-end of 16S ribosomal RNA. This chain is Small ribosomal subunit protein uS17, found in Aquifex aeolicus (strain VF5).